The following is a 314-amino-acid chain: 4-hydroxy-3-methylbut-2-enyl diphosphate reductase (314 aa).

Position 12 (cysteine 12) interacts with [4Fe-4S] cluster. Histidine 41 and histidine 74 together coordinate (2E)-4-hydroxy-3-methylbut-2-enyl diphosphate. Dimethylallyl diphosphate-binding residues include histidine 41 and histidine 74. Histidine 41 and histidine 74 together coordinate isopentenyl diphosphate. Cysteine 96 provides a ligand contact to [4Fe-4S] cluster. Position 124 (histidine 124) interacts with (2E)-4-hydroxy-3-methylbut-2-enyl diphosphate. Histidine 124 contributes to the dimethylallyl diphosphate binding site. Histidine 124 is an isopentenyl diphosphate binding site. The active-site Proton donor is the glutamate 126. Threonine 167 serves as a coordination point for (2E)-4-hydroxy-3-methylbut-2-enyl diphosphate. Cysteine 197 provides a ligand contact to [4Fe-4S] cluster. The (2E)-4-hydroxy-3-methylbut-2-enyl diphosphate site is built by serine 225, serine 226, asparagine 227, and serine 269. Positions 225, 226, 227, and 269 each coordinate dimethylallyl diphosphate. Isopentenyl diphosphate is bound by residues serine 225, serine 226, asparagine 227, and serine 269.

Belongs to the IspH family. [4Fe-4S] cluster is required as a cofactor.

It carries out the reaction isopentenyl diphosphate + 2 oxidized [2Fe-2S]-[ferredoxin] + H2O = (2E)-4-hydroxy-3-methylbut-2-enyl diphosphate + 2 reduced [2Fe-2S]-[ferredoxin] + 2 H(+). The catalysed reaction is dimethylallyl diphosphate + 2 oxidized [2Fe-2S]-[ferredoxin] + H2O = (2E)-4-hydroxy-3-methylbut-2-enyl diphosphate + 2 reduced [2Fe-2S]-[ferredoxin] + 2 H(+). It functions in the pathway isoprenoid biosynthesis; dimethylallyl diphosphate biosynthesis; dimethylallyl diphosphate from (2E)-4-hydroxy-3-methylbutenyl diphosphate: step 1/1. Its pathway is isoprenoid biosynthesis; isopentenyl diphosphate biosynthesis via DXP pathway; isopentenyl diphosphate from 1-deoxy-D-xylulose 5-phosphate: step 6/6. Its function is as follows. Catalyzes the conversion of 1-hydroxy-2-methyl-2-(E)-butenyl 4-diphosphate (HMBPP) into a mixture of isopentenyl diphosphate (IPP) and dimethylallyl diphosphate (DMAPP). Acts in the terminal step of the DOXP/MEP pathway for isoprenoid precursor biosynthesis. In Haemophilus influenzae (strain ATCC 51907 / DSM 11121 / KW20 / Rd), this protein is 4-hydroxy-3-methylbut-2-enyl diphosphate reductase.